The sequence spans 400 residues: S-adenosylmethionine synthase (400 aa).

His-17 serves as a coordination point for ATP. Asp-19 contacts Mg(2+). Residue Glu-45 participates in K(+) binding. Glu-58 and Gln-101 together coordinate L-methionine. The segment at 101 to 111 (QSADIAMGVDQ) is flexible loop. ATP contacts are provided by residues 177–179 (DGK), 244–245 (RF), Asp-253, 259–260 (RK), Ala-276, and Lys-280. Asp-253 contributes to the L-methionine binding site. Position 284 (Lys-284) interacts with L-methionine.

It belongs to the AdoMet synthase family. In terms of assembly, homotetramer; dimer of dimers. Mg(2+) is required as a cofactor. K(+) serves as cofactor.

The protein localises to the cytoplasm. The enzyme catalyses L-methionine + ATP + H2O = S-adenosyl-L-methionine + phosphate + diphosphate. It participates in amino-acid biosynthesis; S-adenosyl-L-methionine biosynthesis; S-adenosyl-L-methionine from L-methionine: step 1/1. Catalyzes the formation of S-adenosylmethionine (AdoMet) from methionine and ATP. The overall synthetic reaction is composed of two sequential steps, AdoMet formation and the subsequent tripolyphosphate hydrolysis which occurs prior to release of AdoMet from the enzyme. The sequence is that of S-adenosylmethionine synthase from Bacillus subtilis (strain 168).